Here is a 301-residue protein sequence, read N- to C-terminus: Probable 5-dehydro-4-deoxyglucarate dehydratase (301 aa).

This sequence belongs to the DapA family.

The catalysed reaction is 5-dehydro-4-deoxy-D-glucarate + H(+) = 2,5-dioxopentanoate + CO2 + H2O. Its pathway is carbohydrate acid metabolism; D-glucarate degradation; 2,5-dioxopentanoate from D-glucarate: step 2/2. This Cereibacter sphaeroides (strain KD131 / KCTC 12085) (Rhodobacter sphaeroides) protein is Probable 5-dehydro-4-deoxyglucarate dehydratase.